The following is a 157-amino-acid chain: Ribosome maturation factor RimP (157 aa).

This sequence belongs to the RimP family.

Its subcellular location is the cytoplasm. In terms of biological role, required for maturation of 30S ribosomal subunits. This Geobacillus kaustophilus (strain HTA426) protein is Ribosome maturation factor RimP.